An 810-amino-acid chain; its full sequence is Lon protease (810 aa).

The Lon N-terminal domain maps to 16–209; the sequence is YPVPPLRDIV…RVYAFMEGEI (194 aa). Position 361–368 (361–368) interacts with ATP; it reads GPPGVGKT. Residues 598–779 form the Lon proteolytic domain; sequence EDLVGVTTGL…DDVLKHALVR (182 aa). Residues Ser685 and Lys728 contribute to the active site.

Belongs to the peptidase S16 family. As to quaternary structure, homohexamer. Organized in a ring with a central cavity.

It is found in the cytoplasm. The enzyme catalyses Hydrolysis of proteins in presence of ATP.. ATP-dependent serine protease that mediates the selective degradation of mutant and abnormal proteins as well as certain short-lived regulatory proteins. Required for cellular homeostasis and for survival from DNA damage and developmental changes induced by stress. Degrades polypeptides processively to yield small peptide fragments that are 5 to 10 amino acids long. Binds to DNA in a double-stranded, site-specific manner. Involved in iron uptake. This chain is Lon protease, found in Azospirillum brasilense.